The chain runs to 449 residues: Exodeoxyribonuclease 7 large subunit (449 aa).

The protein belongs to the XseA family. In terms of assembly, heterooligomer composed of large and small subunits.

It localises to the cytoplasm. It carries out the reaction Exonucleolytic cleavage in either 5'- to 3'- or 3'- to 5'-direction to yield nucleoside 5'-phosphates.. Bidirectionally degrades single-stranded DNA into large acid-insoluble oligonucleotides, which are then degraded further into small acid-soluble oligonucleotides. This is Exodeoxyribonuclease 7 large subunit from Salmonella dublin (strain CT_02021853).